A 112-amino-acid chain; its full sequence is Cell cycle protein GpsB (112 aa).

The stretch at 38–72 (IKDYEAFHKEFEQLKQQNARLKRELEEQKLAATQV) forms a coiled coil.

Belongs to the GpsB family. As to quaternary structure, forms polymers through the coiled coil domains. Interacts with PBP1, MreC and EzrA.

The protein resides in the cytoplasm. Functionally, divisome component that associates with the complex late in its assembly, after the Z-ring is formed, and is dependent on DivIC and PBP2B for its recruitment to the divisome. Together with EzrA, is a key component of the system that regulates PBP1 localization during cell cycle progression. Its main role could be the removal of PBP1 from the cell pole after pole maturation is completed. Also contributes to the recruitment of PBP1 to the division complex. Not essential for septum formation. The sequence is that of Cell cycle protein GpsB from Bacillus anthracis (strain A0248).